Reading from the N-terminus, the 642-residue chain is Regulator of MON1-CCZ1 complex (642 aa).

Residues 462–616 (RPYTESILML…KLYETLSFPK (155 aa)) form the Mic1 domain.

This sequence belongs to the RMC1 family. As to quaternary structure, component of the Mon1-Ccz1 guanyl-nucleotide exchange factor complex made up of Mon1, Ccz1 and Bulli; the interaction of Bulli with the Mon1-Ccz1 heterodimer is mediated via the C-terminal Mic1 domain of Bulli. Mon1 and Ccz1 form a stable complex which displays Rab7 GEF activity with or without Bulli; GEF activity is enhanced by Bulli possibly by improving membrane association of the complex.

It is found in the late endosome. In terms of biological role, positive regulator of the Rab7 guanyl-nucleotide exchange activity of the Mon1-Ccz1 complex, possibly by enhancing its endosomal membrane association. As part of the Mon1-Ccz1 complex involved in endolysosomal biogenesis possibly by mediating Rab conversion, the replacement of Rab5 with Rab7 during late endosome maturation. The sequence is that of Regulator of MON1-CCZ1 complex from Drosophila melanogaster (Fruit fly).